The following is a 188-amino-acid chain: Elongation factor P (188 aa).

Belongs to the elongation factor P family.

It localises to the cytoplasm. It functions in the pathway protein biosynthesis; polypeptide chain elongation. Functionally, involved in peptide bond synthesis. Stimulates efficient translation and peptide-bond synthesis on native or reconstituted 70S ribosomes in vitro. Probably functions indirectly by altering the affinity of the ribosome for aminoacyl-tRNA, thus increasing their reactivity as acceptors for peptidyl transferase. The polypeptide is Elongation factor P (Rhodopseudomonas palustris (strain TIE-1)).